The sequence spans 109 residues: Large ribosomal subunit protein uL22 (109 aa).

Belongs to the universal ribosomal protein uL22 family. As to quaternary structure, part of the 50S ribosomal subunit.

In terms of biological role, this protein binds specifically to 23S rRNA; its binding is stimulated by other ribosomal proteins, e.g. L4, L17, and L20. It is important during the early stages of 50S assembly. It makes multiple contacts with different domains of the 23S rRNA in the assembled 50S subunit and ribosome. Functionally, the globular domain of the protein is located near the polypeptide exit tunnel on the outside of the subunit, while an extended beta-hairpin is found that lines the wall of the exit tunnel in the center of the 70S ribosome. The sequence is that of Large ribosomal subunit protein uL22 from Aromatoleum aromaticum (strain DSM 19018 / LMG 30748 / EbN1) (Azoarcus sp. (strain EbN1)).